The primary structure comprises 463 residues: UDP-N-acetylmuramoylalanine--D-glutamate ligase (463 aa).

An ATP-binding site is contributed by 109–115 (GTDGKST).

Belongs to the MurCDEF family.

The protein localises to the cytoplasm. It carries out the reaction UDP-N-acetyl-alpha-D-muramoyl-L-alanine + D-glutamate + ATP = UDP-N-acetyl-alpha-D-muramoyl-L-alanyl-D-glutamate + ADP + phosphate + H(+). It participates in cell wall biogenesis; peptidoglycan biosynthesis. Cell wall formation. Catalyzes the addition of glutamate to the nucleotide precursor UDP-N-acetylmuramoyl-L-alanine (UMA). This chain is UDP-N-acetylmuramoylalanine--D-glutamate ligase, found in Leptospira interrogans serogroup Icterohaemorrhagiae serovar Lai (strain 56601).